The primary structure comprises 295 residues: Acetylglutamate kinase (295 aa).

Residues glycine 66–glycine 67, arginine 88, and asparagine 193 each bind substrate.

This sequence belongs to the acetylglutamate kinase family. ArgB subfamily.

Its subcellular location is the cytoplasm. It catalyses the reaction N-acetyl-L-glutamate + ATP = N-acetyl-L-glutamyl 5-phosphate + ADP. Its pathway is amino-acid biosynthesis; L-arginine biosynthesis; N(2)-acetyl-L-ornithine from L-glutamate: step 2/4. Catalyzes the ATP-dependent phosphorylation of N-acetyl-L-glutamate. This is Acetylglutamate kinase from Gluconobacter oxydans (strain 621H) (Gluconobacter suboxydans).